The chain runs to 343 residues: tRNA N6-adenosine threonylcarbamoyltransferase (343 aa).

Positions 108 and 112 each coordinate Fe cation. Substrate is bound by residues 129 to 133 (LISGG), Asp-161, Glu-178, and Ser-258. Asp-286 contributes to the Fe cation binding site.

Belongs to the KAE1 / TsaD family. It depends on Fe(2+) as a cofactor.

Its subcellular location is the cytoplasm. The catalysed reaction is L-threonylcarbamoyladenylate + adenosine(37) in tRNA = N(6)-L-threonylcarbamoyladenosine(37) in tRNA + AMP + H(+). Functionally, required for the formation of a threonylcarbamoyl group on adenosine at position 37 (t(6)A37) in tRNAs that read codons beginning with adenine. Is probably involved in the transfer of the threonylcarbamoyl moiety of threonylcarbamoyl-AMP (TC-AMP) to the N6 group of A37. The chain is tRNA N6-adenosine threonylcarbamoyltransferase from Pyrobaculum aerophilum (strain ATCC 51768 / DSM 7523 / JCM 9630 / CIP 104966 / NBRC 100827 / IM2).